Here is a 228-residue protein sequence, read N- to C-terminus: Methylthioribulose-1-phosphate dehydratase (228 aa).

Cysteine 92 is a binding site for substrate. Histidine 110 and histidine 112 together coordinate Zn(2+). Catalysis depends on glutamate 135, which acts as the Proton donor/acceptor. Histidine 192 is a binding site for Zn(2+).

The protein belongs to the aldolase class II family. MtnB subfamily. Requires Zn(2+) as cofactor.

It localises to the cytoplasm. The protein resides in the nucleus. It catalyses the reaction 5-(methylsulfanyl)-D-ribulose 1-phosphate = 5-methylsulfanyl-2,3-dioxopentyl phosphate + H2O. It functions in the pathway amino-acid biosynthesis; L-methionine biosynthesis via salvage pathway; L-methionine from S-methyl-5-thio-alpha-D-ribose 1-phosphate: step 2/6. In terms of biological role, catalyzes the dehydration of methylthioribulose-1-phosphate (MTRu-1-P) into 2,3-diketo-5-methylthiopentyl-1-phosphate (DK-MTP-1-P). The chain is Methylthioribulose-1-phosphate dehydratase from Schizosaccharomyces pombe (strain 972 / ATCC 24843) (Fission yeast).